The sequence spans 123 residues: Iron-sulfur cluster insertion protein ErpA (123 aa).

C51, C115, and C117 together coordinate iron-sulfur cluster.

The protein belongs to the HesB/IscA family. Homodimer. Iron-sulfur cluster is required as a cofactor.

Functionally, required for insertion of 4Fe-4S clusters for at least IspG. The protein is Iron-sulfur cluster insertion protein ErpA of Halorhodospira halophila (strain DSM 244 / SL1) (Ectothiorhodospira halophila (strain DSM 244 / SL1)).